A 374-amino-acid polypeptide reads, in one-letter code: Pectate lyase 3 (374 aa).

An N-terminal signal peptide occupies residues Met1–Ala22. An intrachain disulfide couples Cys93 to Cys176. Asp150, Asp152, Glu187, and Asp191 together coordinate Ca(2+). Residue Arg239 is part of the active site. Cys350 and Cys373 are oxidised to a cystine.

This sequence belongs to the polysaccharide lyase 1 family. PLADES subfamily. It depends on Ca(2+) as a cofactor.

The protein localises to the secreted. The catalysed reaction is Eliminative cleavage of (1-&gt;4)-alpha-D-galacturonan to give oligosaccharides with 4-deoxy-alpha-D-galact-4-enuronosyl groups at their non-reducing ends.. Its pathway is glycan metabolism; pectin degradation; 2-dehydro-3-deoxy-D-gluconate from pectin: step 2/5. Its function is as follows. Involved in maceration and soft-rotting of plant tissue. The polypeptide is Pectate lyase 3 (pel3) (Pectobacterium carotovorum subsp. carotovorum (Erwinia carotovora subsp. carotovora)).